The chain runs to 183 residues: MSQTAKVLLLYAHPESQDSVANRVLLKPAQQLSNVTVHDLYAHYPDFFIDIPREQELLRQHDVIVFQHPLYTYSCPALLKEWLDRVLSRGFSSGPGGNQLAGKYWRSVITTGEPESAYRHDSLNRYPMSDILRPFELTAAMCRMHWMSPMIVYWARRQQPQALASHAKAYGEWLASPIPTGGH.

It belongs to the NAD(P)H dehydrogenase (quinone) family. KefG subfamily. In terms of assembly, interacts with KefB.

Its subcellular location is the cell inner membrane. It catalyses the reaction a quinone + NADH + H(+) = a quinol + NAD(+). The catalysed reaction is a quinone + NADPH + H(+) = a quinol + NADP(+). In terms of biological role, regulatory subunit of a potassium efflux system that confers protection against electrophiles. Required for full activity of KefB. This chain is Glutathione-regulated potassium-efflux system ancillary protein KefG, found in Enterobacter sp. (strain 638).